A 689-amino-acid polypeptide reads, in one-letter code: Glycine--tRNA ligase beta subunit (689 aa).

The protein belongs to the class-II aminoacyl-tRNA synthetase family. In terms of assembly, tetramer of two alpha and two beta subunits.

The protein localises to the cytoplasm. It catalyses the reaction tRNA(Gly) + glycine + ATP = glycyl-tRNA(Gly) + AMP + diphosphate. This chain is Glycine--tRNA ligase beta subunit, found in Shewanella baltica (strain OS185).